A 46-amino-acid chain; its full sequence is Photosystem II reaction center protein Psb30 (46 aa).

Methionine 1 bears the N-formylmethionine mark. Residues 1-20 lie on the Lumenal side of the membrane; the sequence is MGIFNGIIEFLSNINFEVIA. Residues 21–38 form a helical membrane-spanning segment; that stretch reads QLTMIAMIGIAGPMIIFL. The Cytoplasmic segment spans residues 39–46; it reads LAVRRGNL.

It belongs to the Psb30/Ycf12 family. As to quaternary structure, PSII is composed of 1 copy each of membrane proteins PsbA, PsbB, PsbC, PsbD, PsbE, PsbF, PsbH, PsbI, PsbJ, PsbK, PsbL, PsbM, PsbT, PsbX, PsbY, PsbZ, Psb30/Ycf12, peripheral proteins PsbO, CyanoQ (PsbQ), PsbU, PsbV and a large number of cofactors. It forms dimeric complexes. Part of a photosystem II (PSII) assembly intermediate complex PSII-I; crystallized from a strain deleted of psbJ, it forms monomeric PSII before addition of the oxygen evolving complex. PSII-I includes 3 assembly factors not found in mature PSII (Psb27, Psb28 and Psb34). The cofactor is PSII binds multiple chlorophylls, carotenoids and specific lipids..

The protein localises to the cellular thylakoid membrane. Functionally, a core subunit of photosystem II (PSII). PSII is a light-driven water plastoquinone oxidoreductase, using light energy to abstract electrons from H(2)O, generating a proton gradient subsequently used for ATP formation. Helps stabilize PSII. This is Photosystem II reaction center protein Psb30 from Thermosynechococcus vestitus (strain NIES-2133 / IAM M-273 / BP-1).